Consider the following 489-residue polypeptide: Endoglucanase 4 (489 aa).

Residues 1 to 25 form the signal peptide; sequence MAGKSFMTPAIMLAMLLLISPETYA. Asp81 serves as the catalytic Nucleophile. His409 is an active-site residue. Asn453 carries an N-linked (GlcNAc...) asparagine glycan. Active-site residues include Asp460 and Glu469.

It belongs to the glycosyl hydrolase 9 (cellulase E) family.

The protein localises to the secreted. It catalyses the reaction Endohydrolysis of (1-&gt;4)-beta-D-glucosidic linkages in cellulose, lichenin and cereal beta-D-glucans.. This Arabidopsis thaliana (Mouse-ear cress) protein is Endoglucanase 4.